The primary structure comprises 913 residues: Ubiquitin carboxyl-terminal hydrolase 20 (913 aa).

The segment at 6–111 (DLCPHLDSIG…GSSKFSEQDS (106 aa)) adopts a UBP-type zinc-finger fold. The Zn(2+) site is built by C8, H10, C30, C33, C43, C48, C53, H60, H64, H70, C83, and C86. Residues S111, S131, and S133 each carry the phosphoserine modification. Residues 144 to 684 (TGMKNLGNSC…EGYVLFYRKS (541 aa)) form the USP domain. Residue C153 is the Nucleophile of the active site. The segment at 256–414 (LTEARDSDSS…SSSPPRASPV (159 aa)) is disordered. Phosphothreonine is present on T257. Positions 258 to 278 (EARDSDSSDTDEKREGDRSPS) are enriched in basic and acidic residues. Position 304 is a phosphoserine (S304). Over residues 315 to 331 (EASRAISEKERMKDRKF) the composition is skewed to basic and acidic residues. S367 bears the Phosphoserine mark. At T376 the chain carries Phosphothreonine. Residues S407 and S412 each carry the phosphoserine modification. H642 (proton acceptor) is an active-site residue. DUSP domains follow at residues 686-779 (EEAV…LYVC) and 788-891 (ALAK…RQSV).

This sequence belongs to the peptidase C19 family. USP20/USP33 subfamily. Interacts with VHL, leading to its ubiquitination and subsequent degradation. Interacts with CCP110. Interacts with DIO2. Interacts with HIF1A. Interacts with ADRB2. Interacts with USP18. Post-translationally, ubiquitinated via a VHL-dependent pathway for proteasomal degradation.

The protein resides in the cytoplasm. The protein localises to the endoplasmic reticulum. Its subcellular location is the perinuclear region. It localises to the cytoskeleton. It is found in the microtubule organizing center. The protein resides in the centrosome. The enzyme catalyses Thiol-dependent hydrolysis of ester, thioester, amide, peptide and isopeptide bonds formed by the C-terminal Gly of ubiquitin (a 76-residue protein attached to proteins as an intracellular targeting signal).. Its function is as follows. Deubiquitinating enzyme that plays a role in many cellular processes including autophagy, cellular antiviral response or membrane protein biogenesis. Attenuates TLR4-mediated NF-kappa-B signaling by cooperating with beta-arrestin-2/ARRB2 and inhibiting TRAF6 autoubiquitination. Promotes cellular antiviral responses by deconjugating 'Lys-33' and 'Lys-48'-linked ubiquitination of STING1 leading to its stabilization. Plays an essential role in autophagy induction by regulating the ULK1 stability through deubiquitination of ULK1. Acts as a positive regulator for NF-kappa-B activation by TNF-alpha through deubiquitinating 'Lys-48'-linked polyubiquitination of SQSTM1, leading to its increased stability. Acts as a regulator of G-protein coupled receptor (GPCR) signaling by mediating the deubiquitination beta-2 adrenergic receptor (ADRB2). Plays a central role in ADRB2 recycling and resensitization after prolonged agonist stimulation by constitutively binding ADRB2, mediating deubiquitination of ADRB2 and inhibiting lysosomal trafficking of ADRB2. Upon dissociation, it is probably transferred to the translocated beta-arrestins, possibly leading to beta-arrestins deubiquitination and disengagement from ADRB2. This suggests the existence of a dynamic exchange between the ADRB2 and beta-arrestins. Deubiquitinates DIO2, thereby regulating thyroid hormone regulation. Deubiquitinates HIF1A, leading to stabilize HIF1A and enhance HIF1A-mediated activity. Deubiquitinates MCL1, a pivotal member of the anti-apoptotic Bcl-2 protein family to regulate its stability. Within the endoplasmic reticulum, participates with USP33 in the rescue of post-translationally targeted membrane proteins that are inappropriately ubiquitinated by the cytosolic protein quality control in the cytosol. The sequence is that of Ubiquitin carboxyl-terminal hydrolase 20 (USP20) from Pongo abelii (Sumatran orangutan).